The chain runs to 296 residues: Fructose-bisphosphate aldolase class 1 (296 aa).

The active-site Proton acceptor is the glutamate 175. Lysine 212 acts as the Schiff-base intermediate with dihydroxyacetone-P in catalysis.

This sequence belongs to the class I fructose-bisphosphate aldolase family.

It catalyses the reaction beta-D-fructose 1,6-bisphosphate = D-glyceraldehyde 3-phosphate + dihydroxyacetone phosphate. Its pathway is carbohydrate degradation; glycolysis; D-glyceraldehyde 3-phosphate and glycerone phosphate from D-glucose: step 4/4. The polypeptide is Fructose-bisphosphate aldolase class 1 (Staphylococcus aureus (strain MSSA476)).